Reading from the N-terminus, the 333-residue chain is Holliday junction branch migration complex subunit RuvB (333 aa).

Residues Ile-4–Tyr-185 are large ATPase domain (RuvB-L). ATP-binding positions include Ile-24, Arg-25, Gly-66, Lys-69, Thr-70, Thr-71, Glu-132–Tyr-134, Arg-175, Tyr-185, and Arg-222. Position 70 (Thr-70) interacts with Mg(2+). The segment at Ser-186–Asn-256 is small ATPAse domain (RuvB-S). The interval Lys-259–Gly-333 is head domain (RuvB-H). DNA contacts are provided by Arg-295, Arg-314, and Arg-319.

The protein belongs to the RuvB family. Homohexamer. Forms an RuvA(8)-RuvB(12)-Holliday junction (HJ) complex. HJ DNA is sandwiched between 2 RuvA tetramers; dsDNA enters through RuvA and exits via RuvB. An RuvB hexamer assembles on each DNA strand where it exits the tetramer. Each RuvB hexamer is contacted by two RuvA subunits (via domain III) on 2 adjacent RuvB subunits; this complex drives branch migration. In the full resolvosome a probable DNA-RuvA(4)-RuvB(12)-RuvC(2) complex forms which resolves the HJ.

The protein localises to the cytoplasm. It catalyses the reaction ATP + H2O = ADP + phosphate + H(+). Functionally, the RuvA-RuvB-RuvC complex processes Holliday junction (HJ) DNA during genetic recombination and DNA repair, while the RuvA-RuvB complex plays an important role in the rescue of blocked DNA replication forks via replication fork reversal (RFR). RuvA specifically binds to HJ cruciform DNA, conferring on it an open structure. The RuvB hexamer acts as an ATP-dependent pump, pulling dsDNA into and through the RuvAB complex. RuvB forms 2 homohexamers on either side of HJ DNA bound by 1 or 2 RuvA tetramers; 4 subunits per hexamer contact DNA at a time. Coordinated motions by a converter formed by DNA-disengaged RuvB subunits stimulates ATP hydrolysis and nucleotide exchange. Immobilization of the converter enables RuvB to convert the ATP-contained energy into a lever motion, pulling 2 nucleotides of DNA out of the RuvA tetramer per ATP hydrolyzed, thus driving DNA branch migration. The RuvB motors rotate together with the DNA substrate, which together with the progressing nucleotide cycle form the mechanistic basis for DNA recombination by continuous HJ branch migration. Branch migration allows RuvC to scan DNA until it finds its consensus sequence, where it cleaves and resolves cruciform DNA. The polypeptide is Holliday junction branch migration complex subunit RuvB (Hamiltonella defensa subsp. Acyrthosiphon pisum (strain 5AT)).